The chain runs to 431 residues: Hydroxylamine reductase (431 aa).

Positions 5, 8, 17, and 23 each coordinate [4Fe-4S] cluster. Residues histidine 131, glutamate 155, cysteine 199, cysteine 286, cysteine 314, cysteine 339, glutamate 373, and lysine 375 each contribute to the hybrid [4Fe-2O-2S] cluster site. At cysteine 286 the chain carries Cysteine persulfide.

It belongs to the HCP family. Requires [4Fe-4S] cluster as cofactor. It depends on hybrid [4Fe-2O-2S] cluster as a cofactor.

Its subcellular location is the cytoplasm. The catalysed reaction is A + NH4(+) + H2O = hydroxylamine + AH2 + H(+). Its function is as follows. Catalyzes the reduction of hydroxylamine to form NH(3) and H(2)O. The polypeptide is Hydroxylamine reductase (Thermotoga petrophila (strain ATCC BAA-488 / DSM 13995 / JCM 10881 / RKU-1)).